A 1389-amino-acid polypeptide reads, in one-letter code: CRISPR-associated endoribonuclease Cas13a (1389 aa).

Residues Met-1–Arg-347 form an NTD region. Arg-219 serves as a coordination point for crRNA. Binds crRNA stretches follow at residues Tyr-330 to Lys-342, Lys-405 to Tyr-408, and Tyr-432 to Lys-436. Residues Glu-348 to Thr-498 form a helical-1 region. Residues Arg-438 and Lys-441 each act as for pre-crRNA processing in the active site. Residue Lys-441 coordinates crRNA. The interval Lys-471–Arg-475 is binds crRNA. Residue Lys-489 coordinates crRNA. The tract at residues Thr-499–Lys-636 is HEPN-like fold 1-I. The segment at Thr-502 to His-509 is binds crRNA. Active-site for target ssRNA cleavage residues include Arg-597 and His-602. A helical-2 region spans residues Ala-637 to Lys-828. Gln-759 is a binding site for crRNA. Residues Thr-829–Asn-899 are HEPN-like fold 1-II. The binds crRNA stretch occupies residues Asn-853–Arg-858. Trp-865 serves as a coordination point for crRNA. Coiled-coil stretches lie at residues Thr-893–Gln-920, Glu-968–Ile-1046, and Lys-1101–Lys-1131. The interval Leu-900–Glu-1170 is linker. The interval Glu-1170–Pro-1290 is HEPN-like fold 2. Residues Arg-1278 and His-1283 each act as for target ssRNA cleavage in the active site. Binds crRNA regions lie at residues Thr-1311–Ser-1316 and Lys-1338–Lys-1339.

Belongs to the CRISPR-associated endoribonuclease Cas13a family. Monomer. Mg(2+) is required as a cofactor.

RNase activity on target is decreased by EDTA. Target RNA acts as an activator for non-specific ssRNA degradation. Its function is as follows. CRISPR (clustered regularly interspaced short palindromic repeat), is an adaptive immune system that provides protection against mobile genetic elements (viruses, transposable elements and conjugative plasmids). CRISPR clusters contain sequences complementary to antecedent mobile elements (spacers) and target invading nucleic acids. Unlike many single-component effectors, this CRISPR-Cas system targets RNA. CRISPR clusters are transcribed from pre-CRISPR RNA (crRNA) and processed into crRNA (optimally 28 nucleotides in this system) by this protein. This protein processes pre-crRNA at a 'non-typical' site 1 nucleotide upstream of the pre-crRNA stem-loop; it cleaves pre-crRNA from L.buccalis and L.wadei in a similar fashion, whereas the enzymes from the latter 2 bacteria cleave their own pre-crRNA 3 nt further upstream. When the appropriate target sequences are cloned into the CRISPR array, confers immunity to ssRNA(+) enterobacteria phage MS2. Cleaves linear target ssRNA in a crRNA-dependent fashion, preferentially before U residues; has no activity on partially dsRNA, ssDNA or dsDNA. RNA secondary structure surrounding the target influence the cleavage site and efficiency; unlike other CRISPR-Cas effectors Cas13a cleaves outside of the crRNA binding site. In the presence of a viable RNA target other RNAs are also degraded (called collateral RNA degradation), suggesting this type of CRISPR-Cas might also prevent viral spread by inducing programmed cell death or dormancy. This system has a 3' protospacer flanking site (PFS), it does not cleave when the 3' PFS is G (PFS is equivalent to PAM, the protospacer adjacent motif). Mutations of its active site residues results in an RNA-programmed RNA-binding protein. The polypeptide is CRISPR-associated endoribonuclease Cas13a (Leptotrichia shahii (strain DSM 19757 / CCUG 47503 / CIP 107916 / JCM 16776 / LB37)).